The following is a 75-amino-acid chain: uncharacterized protein (75 aa).

Residues 29-72 enclose the LysM domain; it reads EVYHVESGDTLWTIAKSFEIPVQQLMNLNKLSSDRIYPGQIIKI.

This is an uncharacterized protein from Bacillus subtilis (strain 168).